The sequence spans 486 residues: Cysteine--tRNA ligase (486 aa).

A Zn(2+)-binding site is contributed by Cys30. The 'HIGH' region motif lies at 32–42 (PTVYDRAHLGN). Zn(2+) is bound by residues Cys221, His246, and Glu250. The 'KMSKS' region motif lies at 279–283 (KMSKS). Lys282 contacts ATP.

It belongs to the class-I aminoacyl-tRNA synthetase family. Monomer. Requires Zn(2+) as cofactor.

It localises to the cytoplasm. The catalysed reaction is tRNA(Cys) + L-cysteine + ATP = L-cysteinyl-tRNA(Cys) + AMP + diphosphate. The sequence is that of Cysteine--tRNA ligase from Cereibacter sphaeroides (strain ATCC 17029 / ATH 2.4.9) (Rhodobacter sphaeroides).